Consider the following 324-residue polypeptide: NADH-quinone oxidoreductase subunit H (324 aa).

Helical transmembrane passes span 11–31 (ILITVGKAIVILLVVVTCGAF), 81–101 (VIFTLAPMIAFTSMLIAFAIV), 114–134 (IGILFFLMMAGLAVYAVLFAG), 154–174 (VSYEVFIGLSLMGVVAQAGSF), 186–206 (LWNVIPQFFGFITFAIAGVAV), 237–257 (FFVGEYIGIVTVSALMVTLFF), 264–284 (ILPPFVWFALKTGFFMMMFIL), and 304–324 (VCLPITLLNLLATAAVILYNA).

It belongs to the complex I subunit 1 family. NDH-1 is composed of 13 different subunits. Subunits NuoA, H, J, K, L, M, N constitute the membrane sector of the complex.

It localises to the cell inner membrane. The catalysed reaction is a quinone + NADH + 5 H(+)(in) = a quinol + NAD(+) + 4 H(+)(out). Its function is as follows. NDH-1 shuttles electrons from NADH, via FMN and iron-sulfur (Fe-S) centers, to quinones in the respiratory chain. The immediate electron acceptor for the enzyme in this species is believed to be ubiquinone. Couples the redox reaction to proton translocation (for every two electrons transferred, four hydrogen ions are translocated across the cytoplasmic membrane), and thus conserves the redox energy in a proton gradient. This subunit may bind ubiquinone. This chain is NADH-quinone oxidoreductase subunit H, found in Pectobacterium carotovorum subsp. carotovorum (strain PC1).